We begin with the raw amino-acid sequence, 60 residues long: Large ribosomal subunit protein bL32 (60 aa).

The interval 1–28 is disordered; the sequence is MAVQQNKKSRSKRDMRRSHDALTGPTLS. Positions 7-16 are enriched in basic residues; sequence KKSRSKRDMR.

This sequence belongs to the bacterial ribosomal protein bL32 family.

This Cellvibrio japonicus (strain Ueda107) (Pseudomonas fluorescens subsp. cellulosa) protein is Large ribosomal subunit protein bL32.